The following is a 521-amino-acid chain: Maturase K (521 aa).

This sequence belongs to the intron maturase 2 family. MatK subfamily.

It localises to the plastid. Its subcellular location is the chloroplast. Its function is as follows. Usually encoded in the trnK tRNA gene intron. Probably assists in splicing its own and other chloroplast group II introns. This Trillium catesbaei (Catesby's trillium) protein is Maturase K.